The chain runs to 366 residues: Aminomethyltransferase (366 aa).

The protein belongs to the GcvT family. In terms of assembly, the glycine cleavage system is composed of four proteins: P, T, L and H.

It catalyses the reaction N(6)-[(R)-S(8)-aminomethyldihydrolipoyl]-L-lysyl-[protein] + (6S)-5,6,7,8-tetrahydrofolate = N(6)-[(R)-dihydrolipoyl]-L-lysyl-[protein] + (6R)-5,10-methylene-5,6,7,8-tetrahydrofolate + NH4(+). In terms of biological role, the glycine cleavage system catalyzes the degradation of glycine. The polypeptide is Aminomethyltransferase (Bordetella pertussis (strain Tohama I / ATCC BAA-589 / NCTC 13251)).